Consider the following 225-residue polypeptide: Uracil-DNA glycosylase (225 aa).

Aspartate 65 serves as the catalytic Proton acceptor.

It belongs to the uracil-DNA glycosylase (UDG) superfamily. UNG family.

The protein localises to the cytoplasm. It catalyses the reaction Hydrolyzes single-stranded DNA or mismatched double-stranded DNA and polynucleotides, releasing free uracil.. Excises uracil residues from the DNA which can arise as a result of misincorporation of dUMP residues by DNA polymerase or due to deamination of cytosine. The protein is Uracil-DNA glycosylase of Clostridium botulinum (strain Alaska E43 / Type E3).